Here is a 464-residue protein sequence, read N- to C-terminus: Glutamate--tRNA ligase (464 aa).

The 'HIGH' region motif lies at Pro-8–Asn-18. Positions 96, 98, 123, and 125 each coordinate Zn(2+). Residues Lys-240–Arg-244 carry the 'KMSKS' region motif. Lys-243 is a binding site for ATP.

It belongs to the class-I aminoacyl-tRNA synthetase family. Glutamate--tRNA ligase type 1 subfamily. As to quaternary structure, monomer. Zn(2+) serves as cofactor.

The protein localises to the cytoplasm. It carries out the reaction tRNA(Glu) + L-glutamate + ATP = L-glutamyl-tRNA(Glu) + AMP + diphosphate. Functionally, catalyzes the attachment of glutamate to tRNA(Glu) in a two-step reaction: glutamate is first activated by ATP to form Glu-AMP and then transferred to the acceptor end of tRNA(Glu). This is Glutamate--tRNA ligase from Hydrogenobaculum sp. (strain Y04AAS1).